Consider the following 1404-residue polypeptide: DNA-directed RNA polymerase subunit beta' (1404 aa).

Residues C70, C72, C85, and C88 each contribute to the Zn(2+) site. 3 residues coordinate Mg(2+): D460, D462, and D464. C814, C888, C895, and C898 together coordinate Zn(2+).

Belongs to the RNA polymerase beta' chain family. The RNAP catalytic core consists of 2 alpha, 1 beta, 1 beta' and 1 omega subunit. When a sigma factor is associated with the core the holoenzyme is formed, which can initiate transcription. It depends on Mg(2+) as a cofactor. The cofactor is Zn(2+).

The enzyme catalyses RNA(n) + a ribonucleoside 5'-triphosphate = RNA(n+1) + diphosphate. Functionally, DNA-dependent RNA polymerase catalyzes the transcription of DNA into RNA using the four ribonucleoside triphosphates as substrates. The sequence is that of DNA-directed RNA polymerase subunit beta' from Shewanella amazonensis (strain ATCC BAA-1098 / SB2B).